Consider the following 510-residue polypeptide: Protein phosphatase 1H (510 aa).

The 431-residue stretch at 73-503 (STGYAEVINA…DDISVYVIPL (431 aa)) folds into the PPM-type phosphatase domain. Disordered regions lie at residues 105 to 128 (VQST…EGLQ) and 188 to 225 (LGEE…PTRF).

Belongs to the PP2C family.

The protein resides in the nucleus. It localises to the cytoplasm. It carries out the reaction O-phospho-L-seryl-[protein] + H2O = L-seryl-[protein] + phosphate. The catalysed reaction is O-phospho-L-threonyl-[protein] + H2O = L-threonyl-[protein] + phosphate. This Xenopus tropicalis (Western clawed frog) protein is Protein phosphatase 1H (ppm1h).